We begin with the raw amino-acid sequence, 355 residues long: Protein HGH1 homolog (355 aa).

The tract at residues 324–355 is disordered; sequence DEEGDPTPEEIEQMNKKQKLEDEDAQFETDEI. Composition is skewed to acidic residues over residues 325-335 and 344-355; these read EEGDPTPEEIE and EDEDAQFETDEI.

It belongs to the HGH1 family.

This chain is Protein HGH1 homolog, found in Dictyostelium discoideum (Social amoeba).